The sequence spans 277 residues: Anamorsin homolog 2 (277 aa).

The N-terminal SAM-like domain stretch occupies residues Met-1 to Ser-141. The linker stretch occupies residues Ser-141–Leu-186. [2Fe-2S] cluster-binding residues include Cys-197, Cys-207, Cys-210, and Cys-212. The tract at residues Cys-197 to Cys-212 is fe-S binding site A. 4 residues coordinate [4Fe-4S] cluster: Cys-238, Cys-241, Cys-249, and Cys-252. 2 short sequence motifs (cx2C motif) span residues Cys-238–Cys-241 and Cys-249–Cys-252. The segment at Cys-238 to Cys-252 is fe-S binding site B.

Belongs to the anamorsin family. Monomer. [2Fe-2S] cluster serves as cofactor. [4Fe-4S] cluster is required as a cofactor.

It is found in the cytoplasm. The protein localises to the mitochondrion intermembrane space. In terms of biological role, component of the cytosolic iron-sulfur (Fe-S) protein assembly (CIA) machinery. Required for the maturation of extramitochondrial Fe-S proteins. Part of an electron transfer chain functioning in an early step of cytosolic Fe-S biogenesis, facilitating the de novo assembly of a [4Fe-4S] cluster on the cytosolic Fe-S scaffold complex. Electrons are transferred from NADPH via a FAD- and FMN-containing diflavin oxidoreductase. Together with the diflavin oxidoreductase, also required for the assembly of the diferric tyrosyl radical cofactor of ribonucleotide reductase (RNR), probably by providing electrons for reduction during radical cofactor maturation in the catalytic small subunit. This chain is Anamorsin homolog 2, found in Picea sitchensis (Sitka spruce).